A 518-amino-acid chain; its full sequence is 2,3-bisphosphoglycerate-independent phosphoglycerate mutase (518 aa).

Residues Asp14 and Ser64 each coordinate Mn(2+). Catalysis depends on Ser64, which acts as the Phosphoserine intermediate. Substrate is bound by residues His125, 155–156 (RD), Arg187, Arg193, 264–267 (RPDR), and Lys337. Asp404, His408, Asp445, His446, and His467 together coordinate Mn(2+).

This sequence belongs to the BPG-independent phosphoglycerate mutase family. Requires Mn(2+) as cofactor.

It catalyses the reaction (2R)-2-phosphoglycerate = (2R)-3-phosphoglycerate. The protein operates within carbohydrate degradation; glycolysis; pyruvate from D-glyceraldehyde 3-phosphate: step 3/5. In terms of biological role, catalyzes the interconversion of 2-phosphoglycerate and 3-phosphoglycerate. This chain is 2,3-bisphosphoglycerate-independent phosphoglycerate mutase, found in Methanococcoides burtonii (strain DSM 6242 / NBRC 107633 / OCM 468 / ACE-M).